Consider the following 74-residue polypeptide: Neuropeptide-like protein 33 (74 aa).

Residues 1 to 21 (MISTSLLLVVLLFAILAIVDA) form the signal peptide. At tyrosine 72 the chain carries Tyrosine amide.

It belongs to the YARP (YGGW-amide related peptide) family. In terms of tissue distribution, expressed in hypoderm.

It is found in the secreted. Its function is as follows. May have antifungic activity against D.coniospora. The polypeptide is Neuropeptide-like protein 33 (nlp-33) (Caenorhabditis elegans).